A 356-amino-acid polypeptide reads, in one-letter code: tRNA N6-adenosine threonylcarbamoyltransferase (356 aa).

Residues histidine 115 and histidine 119 each contribute to the Fe cation site. Residues 138–142, aspartate 171, glycine 184, and asparagine 283 each bind substrate; that span reads LVSGG. Aspartate 311 lines the Fe cation pocket.

This sequence belongs to the KAE1 / TsaD family. The cofactor is Fe(2+).

It is found in the cytoplasm. It carries out the reaction L-threonylcarbamoyladenylate + adenosine(37) in tRNA = N(6)-L-threonylcarbamoyladenosine(37) in tRNA + AMP + H(+). Its function is as follows. Required for the formation of a threonylcarbamoyl group on adenosine at position 37 (t(6)A37) in tRNAs that read codons beginning with adenine. Is involved in the transfer of the threonylcarbamoyl moiety of threonylcarbamoyl-AMP (TC-AMP) to the N6 group of A37, together with TsaE and TsaB. TsaD likely plays a direct catalytic role in this reaction. This chain is tRNA N6-adenosine threonylcarbamoyltransferase, found in Prochlorococcus marinus (strain MIT 9301).